The following is a 316-amino-acid chain: Ribosomal RNA small subunit methyltransferase H (316 aa).

Residues 35-37 (SGH), Asp-55, Phe-84, Asp-105, and Gln-112 contribute to the S-adenosyl-L-methionine site.

The protein belongs to the methyltransferase superfamily. RsmH family.

The protein resides in the cytoplasm. The enzyme catalyses cytidine(1402) in 16S rRNA + S-adenosyl-L-methionine = N(4)-methylcytidine(1402) in 16S rRNA + S-adenosyl-L-homocysteine + H(+). Its function is as follows. Specifically methylates the N4 position of cytidine in position 1402 (C1402) of 16S rRNA. The sequence is that of Ribosomal RNA small subunit methyltransferase H from Streptococcus equi subsp. zooepidemicus (strain MGCS10565).